The primary structure comprises 196 residues: N-(5'-phosphoribosyl)anthranilate isomerase (196 aa).

Belongs to the TrpF family.

It carries out the reaction N-(5-phospho-beta-D-ribosyl)anthranilate = 1-(2-carboxyphenylamino)-1-deoxy-D-ribulose 5-phosphate. The protein operates within amino-acid biosynthesis; L-tryptophan biosynthesis; L-tryptophan from chorismate: step 3/5. This Nitratiruptor sp. (strain SB155-2) protein is N-(5'-phosphoribosyl)anthranilate isomerase.